A 174-amino-acid polypeptide reads, in one-letter code: Crossover junction endodeoxyribonuclease RuvC (174 aa).

Residues Asp8, Glu67, and Asp139 contribute to the active site. Asp8, Glu67, and Asp139 together coordinate Mg(2+).

The protein belongs to the RuvC family. As to quaternary structure, homodimer which binds Holliday junction (HJ) DNA. The HJ becomes 2-fold symmetrical on binding to RuvC with unstacked arms; it has a different conformation from HJ DNA in complex with RuvA. In the full resolvosome a probable DNA-RuvA(4)-RuvB(12)-RuvC(2) complex forms which resolves the HJ. The cofactor is Mg(2+).

The protein localises to the cytoplasm. The catalysed reaction is Endonucleolytic cleavage at a junction such as a reciprocal single-stranded crossover between two homologous DNA duplexes (Holliday junction).. Its function is as follows. The RuvA-RuvB-RuvC complex processes Holliday junction (HJ) DNA during genetic recombination and DNA repair. Endonuclease that resolves HJ intermediates. Cleaves cruciform DNA by making single-stranded nicks across the HJ at symmetrical positions within the homologous arms, yielding a 5'-phosphate and a 3'-hydroxyl group; requires a central core of homology in the junction. The consensus cleavage sequence is 5'-(A/T)TT(C/G)-3'. Cleavage occurs on the 3'-side of the TT dinucleotide at the point of strand exchange. HJ branch migration catalyzed by RuvA-RuvB allows RuvC to scan DNA until it finds its consensus sequence, where it cleaves and resolves the cruciform DNA. This is Crossover junction endodeoxyribonuclease RuvC from Pseudomonas paraeruginosa (strain DSM 24068 / PA7) (Pseudomonas aeruginosa (strain PA7)).